A 305-amino-acid chain; its full sequence is MPLNLPDKLPAIELLKEENIFVIDTSRATQQDIRPLRIVILNLMPLKITTETDLVRLLSNTPLQVEISFMKIKSHTSKNTPIEHMQTFYTDFEQMRNEKYDGMIITGAPVEQMDFEEVTYWEEITEIFDWARTHVTSTLYICWAAQAGLYHHYGVPKYPLDQKMFGIFEHRVLEPFHSIFRGFDDCFYVPHSRHTEVRREDILKVPELTLLSESKDAGVYMAMARGGREFFVTGHSEYSPYTLDTEYRRDLGKGLPIEIPRNYYVDDDPDKGPLVRWRAHANLLFSNWLNYFVYQETPYNINDIE.

Residue cysteine 142 is the Acyl-thioester intermediate of the active site. Substrate contacts are provided by lysine 163 and serine 192. The active-site Proton acceptor is histidine 235. Residue glutamate 237 is part of the active site. Arginine 249 contacts substrate.

The protein belongs to the MetA family.

The protein localises to the cytoplasm. The catalysed reaction is L-homoserine + acetyl-CoA = O-acetyl-L-homoserine + CoA. It functions in the pathway amino-acid biosynthesis; L-methionine biosynthesis via de novo pathway; O-acetyl-L-homoserine from L-homoserine: step 1/1. Transfers an acetyl group from acetyl-CoA to L-homoserine, forming acetyl-L-homoserine. The sequence is that of Homoserine O-acetyltransferase from Bacteroides thetaiotaomicron (strain ATCC 29148 / DSM 2079 / JCM 5827 / CCUG 10774 / NCTC 10582 / VPI-5482 / E50).